We begin with the raw amino-acid sequence, 567 residues long: Urease subunit alpha (567 aa).

The region spanning 129-567 (GGIDSHIHFI…LPLAQRYFLF (439 aa)) is the Urease domain. Ni(2+)-binding residues include His-134, His-136, and Lys-217. The residue at position 217 (Lys-217) is an N6-carboxylysine. His-219 serves as a coordination point for substrate. Residues His-246 and His-272 each coordinate Ni(2+). His-320 functions as the Proton donor in the catalytic mechanism. Ni(2+) is bound at residue Asp-360.

The protein belongs to the metallo-dependent hydrolases superfamily. Urease alpha subunit family. As to quaternary structure, heterotrimer of UreA (gamma), UreB (beta) and UreC (alpha) subunits. Three heterotrimers associate to form the active enzyme. Requires Ni cation as cofactor. Carboxylation allows a single lysine to coordinate two nickel ions.

It is found in the cytoplasm. The catalysed reaction is urea + 2 H2O + H(+) = hydrogencarbonate + 2 NH4(+). It participates in nitrogen metabolism; urea degradation; CO(2) and NH(3) from urea (urease route): step 1/1. The sequence is that of Urease subunit alpha from Pseudomonas entomophila (strain L48).